A 431-amino-acid polypeptide reads, in one-letter code: 5'-deoxyadenosine deaminase (431 aa).

Zn(2+) contacts are provided by H65 and H67. Substrate-binding residues include E94 and H185. Residue H212 participates in Zn(2+) binding. E215 and D300 together coordinate substrate. D300 is a binding site for Zn(2+).

Belongs to the metallo-dependent hydrolases superfamily. MTA/SAH deaminase family. Homotetramer. The cofactor is Zn(2+).

It catalyses the reaction 5'-deoxyadenosine + H2O + H(+) = 5'-deoxyinosine + NH4(+). The catalysed reaction is S-adenosyl-L-homocysteine + H2O + H(+) = S-inosyl-L-homocysteine + NH4(+). The enzyme catalyses S-methyl-5'-thioadenosine + H2O + H(+) = S-methyl-5'-thioinosine + NH4(+). It carries out the reaction adenosine + H2O + H(+) = inosine + NH4(+). It participates in amino-acid biosynthesis; S-adenosyl-L-methionine biosynthesis. In terms of biological role, catalyzes the deamination of three SAM-derived enzymatic products, namely 5'-deoxyadenosine, S-adenosyl-L-homocysteine, and 5'-methylthioadenosine, to produce the inosine analogs. Can also deaminate adenosine. The preferred substrate for this enzyme is 5'-deoxyadenosine, but all these substrates are efficiently deaminated. Likely functions in a S-adenosyl-L-methionine (SAM) recycling pathway from S-adenosyl-L-homocysteine (SAH) produced from SAM-dependent methylation reactions. May also be involved in the recycling of 5'-deoxyadenosine, whereupon the 5'-deoxyribose moiety of 5'-deoxyinosine is further metabolized to deoxyhexoses used for the biosynthesis of aromatic amino acids in methanogens. This Methanopyrus kandleri (strain AV19 / DSM 6324 / JCM 9639 / NBRC 100938) protein is 5'-deoxyadenosine deaminase.